The sequence spans 362 residues: MHSFASLLAYGLVAGATFASASPIEARDSCTFTTAAAAKAGKAKCSTITLNNIEVPAGTTLDLTGLTSGTKVIFEGTTTFQYEEWAGPLISMSGEHITVTGASGHLINCDGARWWDGKGTSGKKKPKFFYAHGLDSSSITGLNIKNTPLMAFSVQANDITFTDVTINNADGDTQGGHNTDAFDVGNSVGVNIIKPWVHNQDDCLAVNSGENIWFTGGTCIGGHGLSIGSVGDRSNNVVKNVTIEHSTVSNSENAVRIKTISGATGSVSEITYSNIVMSGISDYGVVIQQDYEDGKPTGKPTNGVTIQDVKLESVTGSVDSGATEIYLLCGSGSCSDWTWDDVKVTGGKKSTACKNFPSVASC.

Residues 1 to 21 form the signal peptide; that stretch reads MHSFASLLAYGLVAGATFASA. A propeptide spanning residues 22–27 is cleaved from the precursor; the sequence is SPIEAR. Cysteines 30 and 45 form a disulfide. One copy of the PbH1 1 repeat lies at 156-186; it reads ANDITFTDVTINNADGDTQGGHNTDAFDVGN. Asp201 acts as the Proton donor in catalysis. Cys203 and Cys219 are disulfide-bonded. PbH1 repeat units follow at residues 209–229, 238–259, 267–289, and 301–322; these read GENIWFTGGTCIGGHGLSIGS, VKNVTIEHSTVSNSENAVRIKT, VSEITYSNIVMSGISDYGVVIQQ, and TNGVTIQDVKLESVTGSVDSGA. His223 is an active-site residue. Asn240 carries N-linked (GlcNAc...) (high mannose) asparagine glycosylation. 2 disulfide bridges follow: Cys329/Cys334 and Cys353/Cys362.

Belongs to the glycosyl hydrolase 28 family.

It is found in the secreted. It carries out the reaction (1,4-alpha-D-galacturonosyl)n+m + H2O = (1,4-alpha-D-galacturonosyl)n + (1,4-alpha-D-galacturonosyl)m.. Functionally, involved in maceration and soft-rotting of plant tissue. Hydrolyzes the 1,4-alpha glycosidic bonds of de-esterified pectate in the smooth region of the plant cell wall. The polypeptide is Endopolygalacturonase II (pgaII) (Aspergillus niger (strain ATCC 1015 / CBS 113.46 / FGSC A1144 / LSHB Ac4 / NCTC 3858a / NRRL 328 / USDA 3528.7)).